A 465-amino-acid polypeptide reads, in one-letter code: Uronate isomerase (465 aa).

It belongs to the metallo-dependent hydrolases superfamily. Uronate isomerase family.

The catalysed reaction is D-glucuronate = D-fructuronate. The enzyme catalyses aldehydo-D-galacturonate = keto-D-tagaturonate. The protein operates within carbohydrate metabolism; pentose and glucuronate interconversion. The protein is Uronate isomerase of Streptococcus equi subsp. zooepidemicus (strain H70).